The chain runs to 160 residues: Phosphopantetheine adenylyltransferase (160 aa).

Position 9 (Ser9) interacts with substrate. ATP-binding positions include 9–10 (SF) and His17. The substrate site is built by Lys41, Ile73, and Lys87. Residues 88 to 90 (GLR), Glu98, and 122 to 128 (YSFVSSS) contribute to the ATP site.

This sequence belongs to the bacterial CoaD family. In terms of assembly, homohexamer. Requires Mg(2+) as cofactor.

The protein localises to the cytoplasm. The catalysed reaction is (R)-4'-phosphopantetheine + ATP + H(+) = 3'-dephospho-CoA + diphosphate. Its pathway is cofactor biosynthesis; coenzyme A biosynthesis; CoA from (R)-pantothenate: step 4/5. Reversibly transfers an adenylyl group from ATP to 4'-phosphopantetheine, yielding dephospho-CoA (dPCoA) and pyrophosphate. The protein is Phosphopantetheine adenylyltransferase of Mycolicibacterium gilvum (strain PYR-GCK) (Mycobacterium gilvum (strain PYR-GCK)).